A 104-amino-acid chain; its full sequence is Increased recombination centers protein 13 (104 aa).

Residues 63-83 (LVHLFSYVFFLFLLKICVDVL) traverse the membrane as a helical segment.

Its subcellular location is the membrane. Its function is as follows. May be involved in a pathway contributing to genomic integrity. This chain is Increased recombination centers protein 13 (IRC13), found in Saccharomyces cerevisiae (strain ATCC 204508 / S288c) (Baker's yeast).